We begin with the raw amino-acid sequence, 291 residues long: Aspartate carbamoyltransferase catalytic subunit (291 aa).

Positions 49 and 50 each coordinate carbamoyl phosphate. Lys-77 is an L-aspartate binding site. Arg-99, His-127, and Gln-130 together coordinate carbamoyl phosphate. Residues Arg-160 and Arg-210 each coordinate L-aspartate. Gly-249 and Pro-250 together coordinate carbamoyl phosphate.

Belongs to the aspartate/ornithine carbamoyltransferase superfamily. ATCase family. As to quaternary structure, heterododecamer (2C3:3R2) of six catalytic PyrB chains organized as two trimers (C3), and six regulatory PyrI chains organized as three dimers (R2).

It catalyses the reaction carbamoyl phosphate + L-aspartate = N-carbamoyl-L-aspartate + phosphate + H(+). The protein operates within pyrimidine metabolism; UMP biosynthesis via de novo pathway; (S)-dihydroorotate from bicarbonate: step 2/3. Its function is as follows. Catalyzes the condensation of carbamoyl phosphate and aspartate to form carbamoyl aspartate and inorganic phosphate, the committed step in the de novo pyrimidine nucleotide biosynthesis pathway. The polypeptide is Aspartate carbamoyltransferase catalytic subunit (Sulfurimonas denitrificans (strain ATCC 33889 / DSM 1251) (Thiomicrospira denitrificans (strain ATCC 33889 / DSM 1251))).